A 202-amino-acid chain; its full sequence is Tetranectin (202 aa).

The signal sequence occupies residues 1–21 (MGFWGTYLLFCLFSFLSQLTA). Intrachain disulfides connect C71/C81, C98/C197, and C173/C189. The 122-residue stretch at 77–198 (VNLKCLLAFT…CRDQLPYICQ (122 aa)) folds into the C-type lectin domain.

In terms of assembly, homotrimer. As to expression, highest expression in lung, skeletal muscle and heart. Expressed in retina.

It localises to the secreted. Functionally, tetranectin binds to plasminogen and to isolated kringle 4. May be involved in the packaging of molecules destined for exocytosis. Plays a role in retinal function. In Mus musculus (Mouse), this protein is Tetranectin (Clec3b).